A 230-amino-acid polypeptide reads, in one-letter code: 5'-methylthioadenosine/S-adenosylhomocysteine nucleosidase (230 aa).

Catalysis depends on E12, which acts as the Proton acceptor. Residues G78, I153, and 174-175 (ME) contribute to the substrate site. D198 acts as the Proton donor in catalysis.

The protein belongs to the PNP/UDP phosphorylase family. MtnN subfamily.

The catalysed reaction is S-adenosyl-L-homocysteine + H2O = S-(5-deoxy-D-ribos-5-yl)-L-homocysteine + adenine. The enzyme catalyses S-methyl-5'-thioadenosine + H2O = 5-(methylsulfanyl)-D-ribose + adenine. It catalyses the reaction 5'-deoxyadenosine + H2O = 5-deoxy-D-ribose + adenine. It functions in the pathway amino-acid biosynthesis; L-methionine biosynthesis via salvage pathway; S-methyl-5-thio-alpha-D-ribose 1-phosphate from S-methyl-5'-thioadenosine (hydrolase route): step 1/2. Its function is as follows. Catalyzes the irreversible cleavage of the glycosidic bond in both 5'-methylthioadenosine (MTA) and S-adenosylhomocysteine (SAH/AdoHcy) to adenine and the corresponding thioribose, 5'-methylthioribose and S-ribosylhomocysteine, respectively. Also cleaves 5'-deoxyadenosine, a toxic by-product of radical S-adenosylmethionine (SAM) enzymes, into 5-deoxyribose and adenine. The protein is 5'-methylthioadenosine/S-adenosylhomocysteine nucleosidase of Shewanella sediminis (strain HAW-EB3).